The primary structure comprises 188 residues: Proline-rich protein 3 (188 aa).

The disordered stretch occupies residues 1–157; it reads MPKRKKQNQH…DPQVMEDKSD (157 aa). 2 stretches are compositionally biased toward pro residues: residues 35–46 and 69–82; these read IGPPSLLGPPPM and LIPP…PPWG. The segment covering 83 to 96 has biased composition (low complexity); it reads RGPIRRGLGPRSSP. The span at 145–157 shows a compositional bias: basic and acidic residues; sequence PKDDPQVMEDKSD. Residues 155–183 form a C3H1-type zinc finger; sequence KSDRPVCRHFAKKGHCRYEDLCAFYHPGV.

The sequence is that of Proline-rich protein 3 (PRR3) from Pan troglodytes (Chimpanzee).